The chain runs to 92 residues: Acylphosphatase (92 aa).

Cysteine 5 and cysteine 49 are oxidised to a cystine. Residues 5–92 form the Acylphosphatase-like domain; sequence CIIAWVYGRV…SGELTDFRIR (88 aa). Residues arginine 20 and asparagine 38 contribute to the active site.

It belongs to the acylphosphatase family.

It catalyses the reaction an acyl phosphate + H2O = a carboxylate + phosphate + H(+). The protein is Acylphosphatase of Escherichia coli O6:H1 (strain CFT073 / ATCC 700928 / UPEC).